The primary structure comprises 105 residues: Cell division protein FtsB (105 aa).

Over Met1–Pro3 the chain is Cytoplasmic. The helical transmembrane segment at Phe4–Phe21 threads the bilayer. At Gly22–Gln105 the chain is on the periplasmic side. Positions His38–Leu75 form a coiled coil.

This sequence belongs to the FtsB family. In terms of assembly, part of a complex composed of FtsB, FtsL and FtsQ.

The protein localises to the cell inner membrane. Its function is as follows. Essential cell division protein. May link together the upstream cell division proteins, which are predominantly cytoplasmic, with the downstream cell division proteins, which are predominantly periplasmic. This is Cell division protein FtsB from Shewanella amazonensis (strain ATCC BAA-1098 / SB2B).